A 1076-amino-acid chain; its full sequence is Bifunctional glutamine synthetase adenylyltransferase/adenylyl-removing enzyme (1076 aa).

Residues methionine 1–methionine 521 are adenylyl removase. The tract at residues valine 524 to arginine 1076 is adenylyl transferase. Over residues alanine 1041 to proline 1056 the composition is skewed to low complexity. A disordered region spans residues alanine 1041–arginine 1076.

Belongs to the GlnE family. Mg(2+) serves as cofactor.

The enzyme catalyses [glutamine synthetase]-O(4)-(5'-adenylyl)-L-tyrosine + phosphate = [glutamine synthetase]-L-tyrosine + ADP. The catalysed reaction is [glutamine synthetase]-L-tyrosine + ATP = [glutamine synthetase]-O(4)-(5'-adenylyl)-L-tyrosine + diphosphate. Its function is as follows. Involved in the regulation of glutamine synthetase GlnA, a key enzyme in the process to assimilate ammonia. When cellular nitrogen levels are high, the C-terminal adenylyl transferase (AT) inactivates GlnA by covalent transfer of an adenylyl group from ATP to specific tyrosine residue of GlnA, thus reducing its activity. Conversely, when nitrogen levels are low, the N-terminal adenylyl removase (AR) activates GlnA by removing the adenylyl group by phosphorolysis, increasing its activity. The regulatory region of GlnE binds the signal transduction protein PII (GlnB) which indicates the nitrogen status of the cell. This is Bifunctional glutamine synthetase adenylyltransferase/adenylyl-removing enzyme from Bifidobacterium longum subsp. infantis (strain ATCC 15697 / DSM 20088 / JCM 1222 / NCTC 11817 / S12).